A 519-amino-acid polypeptide reads, in one-letter code: Ribonuclease Y (519 aa).

The chain crosses the membrane as a helical span at residues 3–23; sequence LLSLLLILLGIILGVVVGYIV. A KH domain is found at 209–269; it reads TVSVVNLPND…IRREIARTAL (61 aa). An HD domain is found at 335 to 428; the sequence is VLKHSIEVAH…VAAADALSAA (94 aa).

Belongs to the RNase Y family.

Its subcellular location is the cell membrane. Endoribonuclease that initiates mRNA decay. This is Ribonuclease Y from Staphylococcus epidermidis (strain ATCC 35984 / DSM 28319 / BCRC 17069 / CCUG 31568 / BM 3577 / RP62A).